An 802-amino-acid polypeptide reads, in one-letter code: Nuclear polyadenylated RNA-binding protein 3 (802 aa).

Disordered stretches follow at residues 1–174 and 252–293; these read MSDE…RRET and ALSV…RMRF. The segment covering 22–34 has biased composition (low complexity); it reads SNSNENELMNNSS. Over residues 37–73 the composition is skewed to acidic residues; sequence DGIEFDAPEEEREAEREEENEEQHELEDVNDEEEEDK. Thr86 bears the Phosphothreonine mark. 2 stretches are compositionally biased toward acidic residues: residues 101–139 and 149–158; these read DDDDDDNEEEEEEEEDDDDDDDDDDDDEEEEEEEEEEGN and AAEDGEDEED. Residues 159 to 174 show a composition bias toward basic and acidic residues; sequence KKDKTKDKEVELRRET. Low complexity predominate over residues 260–276; it reads STISTTASASATSGARS. The segment covering 277-293 has biased composition (basic and acidic residues); it reads NDQRKPPLSDAQRRMRF. The region spanning 330–401 is the RRM domain; that stretch reads SRLFIGNLPL…KKLILEVSSS (72 aa). Thr451 is modified (phosphothreonine). Disordered regions lie at residues 571 to 675 and 717 to 802; these read IYGA…PMDQ and MQGQ…KLQK. Over residues 575–590 the composition is skewed to pro residues; it reads PPLPVPNGPAVGPPPQ. Positions 593-614 are enriched in low complexity; sequence YYQGYSMPPPQQQQQQPYGNYG. Positions 632 to 642 are enriched in polar residues; sequence MNQSYGRYQTS. Composition is skewed to low complexity over residues 651 to 661 and 717 to 738; these read QIPQGYGRYQA and MQGQAPQQQQQQLGGYSSMNSS. The span at 745–754 shows a compositional bias: polar residues; that stretch reads TNYNGQNISA. Positions 757-769 are enriched in pro residues; the sequence is SAPPMSHQPPPPQ. Residues 770–785 are compositionally biased toward low complexity; that stretch reads QQQQQQQQQQQQQQQP.

It localises to the nucleus. It is found in the nucleoplasm. May be required for packaging pre-mRNAs into ribonucleoprotein structures amenable to efficient nuclear RNA processing. Binds to poly(A)+ RNA. Appears to act in the maintenance of CLN3 mRNA levels. The chain is Nuclear polyadenylated RNA-binding protein 3 (NAB3) from Saccharomyces cerevisiae (strain ATCC 204508 / S288c) (Baker's yeast).